A 993-amino-acid polypeptide reads, in one-letter code: Signal peptide, CUB and EGF-like domain-containing protein 3 (993 aa).

Residues 1 to 20 (MGSGRVPGLCLLLLLVHARA) form the signal peptide. One can recognise an EGF-like 1; calcium-binding domain in the interval 29 to 69 (DVDECVEGTDNCHIDAICQNTPRSYKCICKSGYTGDGKHCK). Disulfide bonds link cysteine 33–cysteine 46, cysteine 40–cysteine 55, cysteine 57–cysteine 68, cysteine 74–cysteine 86, cysteine 82–cysteine 95, cysteine 97–cysteine 110, cysteine 116–cysteine 127, cysteine 123–cysteine 136, cysteine 161–cysteine 172, cysteine 168–cysteine 182, cysteine 184–cysteine 197, cysteine 201–cysteine 212, cysteine 208–cysteine 221, cysteine 223–cysteine 236, cysteine 240–cysteine 251, cysteine 247–cysteine 260, cysteine 262–cysteine 275, cysteine 281–cysteine 292, cysteine 288–cysteine 301, cysteine 303–cysteine 316, cysteine 322–cysteine 332, cysteine 328–cysteine 341, cysteine 343–cysteine 355, cysteine 361–cysteine 372, cysteine 368–cysteine 381, and cysteine 383–cysteine 397. One can recognise an EGF-like 2; calcium-binding domain in the interval 70-111 (DVDECEREDNAGCVHDCVNIPGNYRCTCYDGFHLAHDGHNCL). Residues 112–148 (DVDECAEGNGGCQQSCVNMMGSYECHCRDGFFLSDNQ) form the EGF-like 3; calcium-binding domain. EGF-like domains follow at residues 157–198 (EGMN…RDCK), 199–237 (LTCN…KTCI), and 238–276 (ETCA…KTCK). The 41-residue stretch at 277 to 317 (DIDECRLNNGGCDHICRNTVGSFECSCKKGYKLLINERSCQ) folds into the EGF-like 7; calcium-binding domain. The region spanning 318–356 (DIDECSFDRTCDHMCVNTPGSFQCLCHRGYLLYGVTHCG) is the EGF-like 8; calcium-binding domain. The EGF-like 9; calcium-binding domain occupies 357–398 (DVDECSINKGGCRFGCINTPGSYQCTCPAGQGRLHWNGKDCT). 5 N-linked (GlcNAc...) asparagine glycosylation sites follow: asparagine 417, asparagine 464, asparagine 685, asparagine 756, and asparagine 785. Cystine bridges form between cysteine 804-cysteine 830 and cysteine 857-cysteine 878. The CUB domain maps to 804–916 (CGGELGEFTG…RGFQIPYVTY (113 aa)).

Forms homooligomers. Forms heterooligomers with SCUBE1 and SCUBE2. Interacts with TGFBR2 through the CUB domain; this interaction does not affect TGFB1-binding to TGFBR2. Interacts with BMP2, BMP4 and BMP7; the interaction is mediated by the CUB domain. Interacts with BMPR1A, BMPR1B and BMPR2; the interaction with BMPR1A and BMPR1B is BMP2- and BMP4-dependent. In terms of processing, N-glycosylated. Proteolytic cleavage produces a CUB-containing C-terminal fragment that retains the ability to bind to TGFBR2. This reaction is catalyzed in vitro by MMP2 and, to a lesser extent, by MMP9. Highly expressed in femur and humerus with little or no expression in non-bone tissues.

Its subcellular location is the secreted. The protein resides in the cell surface. Functionally, is a positive regulator of the BMP signaling pathway, required for proper chondrogenesis, osteogenesis and skeletal development. It acts as a coreceptor for BMP ligands, particularly BMP2 and BMP4, facilitating their interactions with BMP type I receptors. It is required for ligand-induced recruitment of BMP receptors to lipid rafts. Binds to TGFBR2 and activates TGFB signaling. This chain is Signal peptide, CUB and EGF-like domain-containing protein 3, found in Mus musculus (Mouse).